Reading from the N-terminus, the 473-residue chain is Bifunctional protein HldE (473 aa).

Residues 1–318 are ribokinase; it reads MKLSMPRFDQ…RAIQREEGSE (318 aa). 194–197 contacts ATP; it reads NLSE. Asp263 is a catalytic residue. The tract at residues 343-473 is cytidylyltransferase; the sequence is FTNGCFDILH…TAIVEKIRKH (131 aa).

It in the N-terminal section; belongs to the carbohydrate kinase PfkB family. This sequence in the C-terminal section; belongs to the cytidylyltransferase family. Homodimer.

The catalysed reaction is D-glycero-beta-D-manno-heptose 7-phosphate + ATP = D-glycero-beta-D-manno-heptose 1,7-bisphosphate + ADP + H(+). It catalyses the reaction D-glycero-beta-D-manno-heptose 1-phosphate + ATP + H(+) = ADP-D-glycero-beta-D-manno-heptose + diphosphate. It participates in nucleotide-sugar biosynthesis; ADP-L-glycero-beta-D-manno-heptose biosynthesis; ADP-L-glycero-beta-D-manno-heptose from D-glycero-beta-D-manno-heptose 7-phosphate: step 1/4. It functions in the pathway nucleotide-sugar biosynthesis; ADP-L-glycero-beta-D-manno-heptose biosynthesis; ADP-L-glycero-beta-D-manno-heptose from D-glycero-beta-D-manno-heptose 7-phosphate: step 3/4. Catalyzes the phosphorylation of D-glycero-D-manno-heptose 7-phosphate at the C-1 position to selectively form D-glycero-beta-D-manno-heptose-1,7-bisphosphate. In terms of biological role, catalyzes the ADP transfer from ATP to D-glycero-beta-D-manno-heptose 1-phosphate, yielding ADP-D-glycero-beta-D-manno-heptose. This chain is Bifunctional protein HldE, found in Pseudomonas entomophila (strain L48).